Consider the following 158-residue polypeptide: NAD(P)H-quinone oxidoreductase subunit N (158 aa).

Belongs to the complex I NdhN subunit family. NDH-1 can be composed of about 15 different subunits; different subcomplexes with different compositions have been identified which probably have different functions.

It localises to the cellular thylakoid membrane. It carries out the reaction a plastoquinone + NADH + (n+1) H(+)(in) = a plastoquinol + NAD(+) + n H(+)(out). It catalyses the reaction a plastoquinone + NADPH + (n+1) H(+)(in) = a plastoquinol + NADP(+) + n H(+)(out). Functionally, NDH-1 shuttles electrons from an unknown electron donor, via FMN and iron-sulfur (Fe-S) centers, to quinones in the respiratory and/or the photosynthetic chain. The immediate electron acceptor for the enzyme in this species is believed to be plastoquinone. Couples the redox reaction to proton translocation, and thus conserves the redox energy in a proton gradient. Cyanobacterial NDH-1 also plays a role in inorganic carbon-concentration. In Prochlorococcus marinus (strain MIT 9301), this protein is NAD(P)H-quinone oxidoreductase subunit N.